Consider the following 85-residue polypeptide: Oxytocin-neurophysin 1 (85 aa).

Glycine amide is present on G3. Intrachain disulfides connect C16-C60, C19-C33, C27-C50, C34-C40, C67-C79, and C80-C85.

Belongs to the vasopressin/oxytocin family. Interacts with oxytocin receptor (Ki=1.5 nM). Interacts with vasopressin V1aR/AVPR1A (Ki=37 nM), V1bR/AVPR1B (Ki=222 nM), and V2R/AVPR2 receptors (Ki=823 nM).

Neurophysin 1 specifically binds oxytocin. Its function is as follows. Oxytocin causes contraction of the smooth muscle of the uterus and of the mammary gland. Acts by binding to oxytocin receptor (OXTR). The chain is Oxytocin-neurophysin 1 (OXT) from Papio hamadryas (Hamadryas baboon).